A 657-amino-acid chain; its full sequence is Pentatricopeptide repeat-containing protein At1g11710, mitochondrial (657 aa).

A mitochondrion-targeting transit peptide spans 1–74 (MFGHVFSRRT…REFRSSPKLA (74 aa)). PPR repeat units lie at residues 147-181 (SPDV…GFCV), 182-216 (SVHA…GYVE), 217-251 (NVNT…GVWP), 252-282 (NVVS…MGMM), 290-324 (NAVT…GVDC), 325-359 (NERT…GLVV), 360-394 (NTVI…NMQI), 395-429 (DRFT…KLVE), 430-464 (DIVC…GLSL), 465-499 (DAIS…NKTS), 500-530 (NLVI…MEIK), 531-565 (DIVT…DGEK), 568-602 (SLVT…GVVP), and 603-637 (DSIT…GVTP).

This sequence belongs to the PPR family. P subfamily.

The protein resides in the mitochondrion. The protein is Pentatricopeptide repeat-containing protein At1g11710, mitochondrial of Arabidopsis thaliana (Mouse-ear cress).